A 225-amino-acid chain; its full sequence is Octanoyltransferase (225 aa).

Residues 37–217 enclose the BPL/LPL catalytic domain; sequence SDTPDEFWVV…ELASLIGYQT (181 aa). Substrate contacts are provided by residues 76–83, 148–150, and 161–163; these read RGGQVTYH, SLG, and GLA. The active-site Acyl-thioester intermediate is Cys-179.

It belongs to the LipB family.

It is found in the cytoplasm. The catalysed reaction is octanoyl-[ACP] + L-lysyl-[protein] = N(6)-octanoyl-L-lysyl-[protein] + holo-[ACP] + H(+). The protein operates within protein modification; protein lipoylation via endogenous pathway; protein N(6)-(lipoyl)lysine from octanoyl-[acyl-carrier-protein]: step 1/2. In terms of biological role, catalyzes the transfer of endogenously produced octanoic acid from octanoyl-acyl-carrier-protein onto the lipoyl domains of lipoate-dependent enzymes. Lipoyl-ACP can also act as a substrate although octanoyl-ACP is likely to be the physiological substrate. The protein is Octanoyltransferase of Aeromonas salmonicida (strain A449).